The following is a 1406-amino-acid chain: DNA-directed RNA polymerase subunit beta' (1406 aa).

Zn(2+) is bound by residues Cys-70, Cys-72, Cys-85, and Cys-88. Mg(2+) contacts are provided by Asp-460, Asp-462, and Asp-464. Residues Cys-814, Cys-888, Cys-895, and Cys-898 each coordinate Zn(2+).

Belongs to the RNA polymerase beta' chain family. In terms of assembly, the RNAP catalytic core consists of 2 alpha, 1 beta, 1 beta' and 1 omega subunit. When a sigma factor is associated with the core the holoenzyme is formed, which can initiate transcription. Mg(2+) serves as cofactor. The cofactor is Zn(2+).

It catalyses the reaction RNA(n) + a ribonucleoside 5'-triphosphate = RNA(n+1) + diphosphate. Its function is as follows. DNA-dependent RNA polymerase catalyzes the transcription of DNA into RNA using the four ribonucleoside triphosphates as substrates. This chain is DNA-directed RNA polymerase subunit beta', found in Yersinia enterocolitica serotype O:8 / biotype 1B (strain NCTC 13174 / 8081).